The primary structure comprises 176 residues: Ribosome maturation factor RimM (176 aa).

The 73-residue stretch at 101 to 173 (EGEYYHYRLI…RMVVDLPEGL (73 aa)) folds into the PRC barrel domain.

Belongs to the RimM family. In terms of assembly, binds ribosomal protein uS19.

It is found in the cytoplasm. An accessory protein needed during the final step in the assembly of 30S ribosomal subunit, possibly for assembly of the head region. Essential for efficient processing of 16S rRNA. May be needed both before and after RbfA during the maturation of 16S rRNA. It has affinity for free ribosomal 30S subunits but not for 70S ribosomes. The chain is Ribosome maturation factor RimM from Syntrophobacter fumaroxidans (strain DSM 10017 / MPOB).